A 563-amino-acid polypeptide reads, in one-letter code: GTPase Obg (563 aa).

Residues 2-168 form the Obg domain; it reads SDFVDRVTVH…RDVILELKSI (167 aa). The OBG-type G domain occupies 169-349; the sequence is ADVALVGFPS…LNFALSALVH (181 aa). Residues 175 to 182, 200 to 204, 221 to 224, 301 to 304, and 330 to 332 contribute to the GTP site; these read GFPSAGKS, FTTLV, DVPG, NKID, and STA. Mg(2+) is bound by residues S182 and T202. One can recognise an OCT domain in the interval 383–469; that stretch reads DEGGSALEFT…ARMVEFDWDP (87 aa). A disordered region spans residues 529-563; that stretch reads RKAGHWADPTVDDDRHDETSLFGHGESSEDGETEE.

Belongs to the TRAFAC class OBG-HflX-like GTPase superfamily. OBG GTPase family. Monomer. Requires Mg(2+) as cofactor.

It is found in the cytoplasm. Functionally, an essential GTPase which binds GTP, GDP and possibly (p)ppGpp with moderate affinity, with high nucleotide exchange rates and a fairly low GTP hydrolysis rate. Plays a role in control of the cell cycle, stress response, ribosome biogenesis and in those bacteria that undergo differentiation, in morphogenesis control. This Bifidobacterium longum (strain NCC 2705) protein is GTPase Obg.